The following is an 83-amino-acid chain: Salivary thrombin inhibitor anophelin (83 aa).

Positions 1-22 (MANKLVLISLLCVVLVAKITQA) are cleaved as a signal peptide. The disordered stretch occupies residues 25 to 51 (QYAPGDEPSYDEDTDDSDKLVENDTSI). An N-linked (GlcNAc...) asparagine glycan is attached at Asn47. A sufficient for host thrombin inhibition region spans residues 54-83 (EDYAAIEASLSETFNTAADPGRRLGEGSKP). Residues 56-62 (YAAIEAS) are blocks exosite I of host thrombin. A disordered region spans residues 64 to 83 (SETFNTAADPGRRLGEGSKP). The segment at 72 to 75 (DPGR) is blocks active site cleft of host thrombin in a reverse direction compared to substrates. A compositionally biased stretch (basic and acidic residues) spans 73–83 (PGRRLGEGSKP).

This sequence belongs to the anophelin family. In terms of assembly, interacts with human F2 (thrombin); the interaction results in thrombin inhibition. Salivary gland (at protein level).

The protein resides in the secreted. Its activity is regulated as follows. Increasing concentration of NaCl decreases affinity for thrombin. Its function is as follows. Salivary protein with anticoagulant activity that inhibits host thrombin (F2); binds to the proteinase in a reverse orientation (opposite to substrates). Inhibits thrombin-induced platelet aggregation. In Anopheles albimanus (New world malaria mosquito), this protein is Salivary thrombin inhibitor anophelin.